The sequence spans 440 residues: 23S rRNA (uracil(1939)-C(5))-methyltransferase RlmD (440 aa).

Positions 1–21 are disordered; sequence MRRRTSPRRTTTSKPQPIGPI. A TRAM domain is found at 15-73; that stretch reads PQPIGPIQTFEVDGLTHEAKGVARLQGKVTFIEGALPGETVEAQVNKAGRRFDEAVLVN. [4Fe-4S] cluster is bound by residues cysteine 86, cysteine 92, cysteine 95, and cysteine 169. S-adenosyl-L-methionine-binding residues include glutamine 273, phenylalanine 302, asparagine 307, glutamate 323, aspartate 350, and aspartate 370. Cysteine 396 acts as the Nucleophile in catalysis.

The protein belongs to the class I-like SAM-binding methyltransferase superfamily. RNA M5U methyltransferase family. RlmD subfamily.

It catalyses the reaction uridine(1939) in 23S rRNA + S-adenosyl-L-methionine = 5-methyluridine(1939) in 23S rRNA + S-adenosyl-L-homocysteine + H(+). Its function is as follows. Catalyzes the formation of 5-methyl-uridine at position 1939 (m5U1939) in 23S rRNA. This Marinomonas sp. (strain MWYL1) protein is 23S rRNA (uracil(1939)-C(5))-methyltransferase RlmD.